The sequence spans 207 residues: Large ribosomal subunit protein uL4 (207 aa).

The disordered stretch occupies residues 44-81; the sequence is KRQGTQSAKTRSEVRGGGRKPWRQKGTGRARQGSIRSP. Positions 60 to 71 are enriched in basic residues; it reads GGRKPWRQKGTG.

This sequence belongs to the universal ribosomal protein uL4 family. Part of the 50S ribosomal subunit.

Functionally, one of the primary rRNA binding proteins, this protein initially binds near the 5'-end of the 23S rRNA. It is important during the early stages of 50S assembly. It makes multiple contacts with different domains of the 23S rRNA in the assembled 50S subunit and ribosome. Forms part of the polypeptide exit tunnel. This is Large ribosomal subunit protein uL4 from Finegoldia magna (strain ATCC 29328 / DSM 20472 / WAL 2508) (Peptostreptococcus magnus).